The following is a 63-amino-acid chain: Small ribosomal subunit protein eS30 (63 aa).

The tract at residues 1–33 (MGKVHGSLARAGKVKSQTPKVEKQEKPKKPQGR) is disordered.

Belongs to the eukaryotic ribosomal protein eS30 family. Component of the small ribosomal subunit. Mature ribosomes consist of a small (40S) and a large (60S) subunit. The 40S subunit contains about 32 different proteins and 1 molecule of RNA (18S). The 60S subunit contains 45 different proteins and 3 molecules of RNA (25S, 5.8S and 5S).

Its subcellular location is the cytoplasm. In terms of biological role, component of the ribosome, a large ribonucleoprotein complex responsible for the synthesis of proteins in the cell. The small ribosomal subunit (SSU) binds messenger RNAs (mRNAs) and translates the encoded message by selecting cognate aminoacyl-transfer RNA (tRNA) molecules. The large subunit (LSU) contains the ribosomal catalytic site termed the peptidyl transferase center (PTC), which catalyzes the formation of peptide bonds, thereby polymerizing the amino acids delivered by tRNAs into a polypeptide chain. The nascent polypeptides leave the ribosome through a tunnel in the LSU and interact with protein factors that function in enzymatic processing, targeting, and the membrane insertion of nascent chains at the exit of the ribosomal tunnel. The sequence is that of Small ribosomal subunit protein eS30 (RPS30) from Candida albicans (strain SC5314 / ATCC MYA-2876) (Yeast).